The chain runs to 395 residues: 1-deoxy-D-xylulose 5-phosphate reductoisomerase (395 aa).

6 residues coordinate NADPH: T10, G11, S12, I13, N38, and N122. Position 123 (K123) interacts with 1-deoxy-D-xylulose 5-phosphate. E124 contacts NADPH. A Mn(2+)-binding site is contributed by D148. 1-deoxy-D-xylulose 5-phosphate contacts are provided by S149, E150, S178, and H200. E150 is a Mn(2+) binding site. Residue G206 coordinates NADPH. Residues S213, N218, K219, and E222 each contribute to the 1-deoxy-D-xylulose 5-phosphate site. E222 provides a ligand contact to Mn(2+).

The protein belongs to the DXR family. Mg(2+) serves as cofactor. The cofactor is Mn(2+).

It carries out the reaction 2-C-methyl-D-erythritol 4-phosphate + NADP(+) = 1-deoxy-D-xylulose 5-phosphate + NADPH + H(+). It participates in isoprenoid biosynthesis; isopentenyl diphosphate biosynthesis via DXP pathway; isopentenyl diphosphate from 1-deoxy-D-xylulose 5-phosphate: step 1/6. Catalyzes the NADPH-dependent rearrangement and reduction of 1-deoxy-D-xylulose-5-phosphate (DXP) to 2-C-methyl-D-erythritol 4-phosphate (MEP). The chain is 1-deoxy-D-xylulose 5-phosphate reductoisomerase from Elusimicrobium minutum (strain Pei191).